The primary structure comprises 325 residues: Olfactory receptor 1S2 (325 aa).

Residues Met-1 to Asn-38 lie on the Extracellular side of the membrane. Residue Asn-18 is glycosylated (N-linked (GlcNAc...) asparagine). The chain crosses the membrane as a helical span at residues Leu-39 to Ile-62. Over Ser-63–Thr-70 the chain is Cytoplasmic. Residues Pro-71–Pro-92 form a helical membrane-spanning segment. At Lys-93 to Gln-113 the chain is on the extracellular side. Cys-110 and Cys-202 are oxidised to a cystine. A helical membrane pass occupies residues Met-114–Phe-133. The Cytoplasmic portion of the chain corresponds to Asp-134 to Arg-152. A helical membrane pass occupies residues Phe-153 to Thr-171. Residues His-172 to Asn-208 are Extracellular-facing. Residues Glu-209–Val-232 form a helical membrane-spanning segment. The Cytoplasmic portion of the chain corresponds to Cys-233–Lys-249. The chain crosses the membrane as a helical span at residues Ala-250–Tyr-272. At Phe-273–Lys-285 the chain is on the extracellular side. Residues Ile-286–Leu-305 traverse the membrane as a helical segment. Residues Arg-306 to Leu-325 are Cytoplasmic-facing.

Belongs to the G-protein coupled receptor 1 family.

The protein resides in the cell membrane. Odorant receptor. This is Olfactory receptor 1S2 (OR1S2) from Homo sapiens (Human).